A 174-amino-acid chain; its full sequence is Shikimate kinase (174 aa).

Residue 15–20 participates in ATP binding; that stretch reads GTGKST. Serine 19 is a binding site for Mg(2+). Aspartate 37, arginine 61, and glycine 82 together coordinate substrate. Arginine 120 lines the ATP pocket. Residue arginine 138 coordinates substrate.

It belongs to the shikimate kinase family. Monomer. The cofactor is Mg(2+).

Its subcellular location is the cytoplasm. It catalyses the reaction shikimate + ATP = 3-phosphoshikimate + ADP + H(+). It participates in metabolic intermediate biosynthesis; chorismate biosynthesis; chorismate from D-erythrose 4-phosphate and phosphoenolpyruvate: step 5/7. In terms of biological role, catalyzes the specific phosphorylation of the 3-hydroxyl group of shikimic acid using ATP as a cosubstrate. The chain is Shikimate kinase from Staphylococcus aureus (strain NCTC 8325 / PS 47).